Reading from the N-terminus, the 144-residue chain is Cell division protein SepF (144 aa).

The interval 16–42 is disordered; it reads DEMNEAPYTEAEQQEEEVPQAQKNERR.

This sequence belongs to the SepF family. In terms of assembly, homodimer. Interacts with FtsZ.

The protein localises to the cytoplasm. Its function is as follows. Cell division protein that is part of the divisome complex and is recruited early to the Z-ring. Probably stimulates Z-ring formation, perhaps through the cross-linking of FtsZ protofilaments. Its function overlaps with FtsA. The protein is Cell division protein SepF of Lactobacillus gasseri (strain ATCC 33323 / DSM 20243 / BCRC 14619 / CIP 102991 / JCM 1131 / KCTC 3163 / NCIMB 11718 / NCTC 13722 / AM63).